A 247-amino-acid chain; its full sequence is 2,3-bisphosphoglycerate-dependent phosphoglycerate mutase (247 aa).

Residues 8-15 (RHGQSLWN), 21-22 (TG), arginine 60, 87-90 (ERHY), lysine 98, 114-115 (RR), and 183-184 (GN) contribute to the substrate site. Histidine 9 serves as the catalytic Tele-phosphohistidine intermediate. Glutamate 87 serves as the catalytic Proton donor/acceptor.

This sequence belongs to the phosphoglycerate mutase family. BPG-dependent PGAM subfamily.

It carries out the reaction (2R)-2-phosphoglycerate = (2R)-3-phosphoglycerate. It functions in the pathway carbohydrate degradation; glycolysis; pyruvate from D-glyceraldehyde 3-phosphate: step 3/5. Functionally, catalyzes the interconversion of 2-phosphoglycerate and 3-phosphoglycerate. The sequence is that of 2,3-bisphosphoglycerate-dependent phosphoglycerate mutase from Hydrogenobaculum sp. (strain Y04AAS1).